Consider the following 114-residue polypeptide: Ribonuclease P protein component (114 aa).

This sequence belongs to the RnpA family. In terms of assembly, consists of a catalytic RNA component (M1 or rnpB) and a protein subunit.

It carries out the reaction Endonucleolytic cleavage of RNA, removing 5'-extranucleotides from tRNA precursor.. In terms of biological role, RNaseP catalyzes the removal of the 5'-leader sequence from pre-tRNA to produce the mature 5'-terminus. It can also cleave other RNA substrates such as 4.5S RNA. The protein component plays an auxiliary but essential role in vivo by binding to the 5'-leader sequence and broadening the substrate specificity of the ribozyme. This is Ribonuclease P protein component from Limosilactobacillus fermentum (strain NBRC 3956 / LMG 18251) (Lactobacillus fermentum).